The sequence spans 86 residues: Acyl carrier protein (86 aa).

The Carrier domain occupies 10–85 (DKIEQKVIEM…DVIKYIKERQ (76 aa)). S45 carries the post-translational modification O-(pantetheine 4'-phosphoryl)serine.

This sequence belongs to the acyl carrier protein (ACP) family. In terms of processing, 4'-phosphopantetheine is transferred from CoA to a specific serine of apo-ACP by AcpS. This modification is essential for activity because fatty acids are bound in thioester linkage to the sulfhydryl of the prosthetic group.

Its subcellular location is the cytoplasm. It participates in lipid metabolism; fatty acid biosynthesis. Its function is as follows. Carrier of the growing fatty acid chain in fatty acid biosynthesis. The protein is Acyl carrier protein of Rickettsia prowazekii (strain Madrid E).